Here is a 436-residue protein sequence, read N- to C-terminus: Gamma-glutamyl phosphate reductase (436 aa).

Belongs to the gamma-glutamyl phosphate reductase family.

The protein localises to the cytoplasm. The catalysed reaction is L-glutamate 5-semialdehyde + phosphate + NADP(+) = L-glutamyl 5-phosphate + NADPH + H(+). The protein operates within amino-acid biosynthesis; L-proline biosynthesis; L-glutamate 5-semialdehyde from L-glutamate: step 2/2. Catalyzes the NADPH-dependent reduction of L-glutamate 5-phosphate into L-glutamate 5-semialdehyde and phosphate. The product spontaneously undergoes cyclization to form 1-pyrroline-5-carboxylate. The chain is Gamma-glutamyl phosphate reductase from Salinibacter ruber (strain DSM 13855 / M31).